The primary structure comprises 950 residues: Voltage-gated inwardly rectifying potassium channel KCNH6 (950 aa).

At 1 to 261 (MPVRRGHVAP…YSPFKAVWDW (261 aa)) the chain is on the cytoplasmic side. Residues 41-70 (IIYCNDGFCELFGYSRVEVMQRPCTCDFLT) enclose the PAS domain. The PAC domain maps to 92–144 (CKVDILYYRKDASSFRCLVDVVPVKNEDGAVIMFILNFEDLAQLLAKSSSRSL). The disordered stretch occupies residues 154 to 174 (LGSEGSHSRPSGQGPGPGRGK). Residues 262 to 282 (LILLLVIYTAVFTPYSAAFLL) traverse the membrane as a helical segment. Residues 283–298 (SDQDESQRGTCGYTCS) lie on the Extracellular side of the membrane. The chain crosses the membrane as a helical span at residues 299 to 319 (PLTVVDLIVDIMFVVDIVINF). Topologically, residues 320–340 (RTTYVNTNDEVVSHPRRIAVH) are cytoplasmic. A helical transmembrane segment spans residues 341-361 (YFKGWFLIDMVAAIPFDLLIF). Residues 362-370 (RTGSDETTT) are Extracellular-facing. A helical; Voltage-sensor membrane pass occupies residues 371–391 (LIGLLKTARLLRLVRVARKLD). Over 392–398 (RYSEYGA) the chain is Cytoplasmic. Residues 399-419 (AVLFLLMCTFALIAHWLACIW) form a helical membrane-spanning segment. Over 420–463 (YAIGNVERPYLEPKIGWLDSLGAQLGKQYNGSDPASGPSVQDKY) the chain is Extracellular. The pore-forming intramembrane region spans 464 to 484 (VTALYFTFSSLTSVGFGNVSP). Residues 476-481 (SVGFGN) carry the Selectivity filter motif. Residues 485 to 490 (NTNSEK) lie on the Extracellular side of the membrane. A helical transmembrane segment spans residues 491 to 511 (VFSICVMLIGSLMYASIFGNV). Residues 512 to 950 (SAIIQRLYSG…HGSDPGFTRS (439 aa)) are Cytoplasmic-facing. Residues 594 to 694 (AFRGASKGCL…IHRADLLEVL (101 aa)) are cNMP-binding domain. Disordered stretches follow at residues 719 to 750 (GGLQ…APSL) and 890 to 950 (VPSS…FTRS). The span at 740–750 (NDSQSGAAPSL) shows a compositional bias: polar residues. Residues 898–912 (PGGLLSPLASPLRPL) are compositionally biased toward low complexity.

This sequence belongs to the potassium channel family. H (Eag) (TC 1.A.1.20) subfamily. Kv11.2/KCNH6 sub-subfamily. The potassium channel is probably composed of a homo- or heterotetrameric complex of pore-forming alpha subunits that can associate only within their subfamily. In terms of tissue distribution, highly expressed in celiac and superior mesenteric ganglia, but not detected in brain or in heart. Detected at low levels in retina. Also found in pituitary. Also found in the olfactory bulb (granular and mitral cell layers).

It is found in the cell membrane. The enzyme catalyses K(+)(in) = K(+)(out). Its function is as follows. Pore-forming (alpha) subunit of voltage-gated inwardly rectifying potassium channel. Characterized by unusual gating kinetics by producing relatively small outward currents during membrane depolarization and large inward currents during subsequent repolarization which reflect a rapid inactivation during depolarization and quick recovery from inactivation but slow deactivation (closing) during repolarization. Activates even more slowly than KCNH2. This is Voltage-gated inwardly rectifying potassium channel KCNH6 from Rattus norvegicus (Rat).